The chain runs to 449 residues: Exodeoxyribonuclease 7 large subunit (449 aa).

It belongs to the XseA family. As to quaternary structure, heterooligomer composed of large and small subunits.

The protein resides in the cytoplasm. The catalysed reaction is Exonucleolytic cleavage in either 5'- to 3'- or 3'- to 5'-direction to yield nucleoside 5'-phosphates.. In terms of biological role, bidirectionally degrades single-stranded DNA into large acid-insoluble oligonucleotides, which are then degraded further into small acid-soluble oligonucleotides. The sequence is that of Exodeoxyribonuclease 7 large subunit from Latilactobacillus sakei subsp. sakei (strain 23K) (Lactobacillus sakei subsp. sakei).